The chain runs to 350 residues: 3-isopropylmalate dehydrogenase (350 aa).

Position 76–87 (76–87) interacts with NAD(+); it reads GPKWDNAPKRPE. Substrate contacts are provided by R94, R104, R132, and D217. Positions 217, 241, and 245 each coordinate Mg(2+). 275-287 contributes to the NAD(+) binding site; sequence GSAPDIANQNIAN.

Belongs to the isocitrate and isopropylmalate dehydrogenases family. LeuB type 1 subfamily. As to quaternary structure, homodimer. It depends on Mg(2+) as a cofactor. The cofactor is Mn(2+).

It localises to the cytoplasm. It carries out the reaction (2R,3S)-3-isopropylmalate + NAD(+) = 4-methyl-2-oxopentanoate + CO2 + NADH. It participates in amino-acid biosynthesis; L-leucine biosynthesis; L-leucine from 3-methyl-2-oxobutanoate: step 3/4. Functionally, catalyzes the oxidation of 3-carboxy-2-hydroxy-4-methylpentanoate (3-isopropylmalate) to 3-carboxy-4-methyl-2-oxopentanoate. The product decarboxylates to 4-methyl-2 oxopentanoate. The chain is 3-isopropylmalate dehydrogenase from Listeria monocytogenes serovar 1/2a (strain ATCC BAA-679 / EGD-e).